The chain runs to 156 residues: 6,7-dimethyl-8-ribityllumazine synthase (156 aa).

Residues Phe25, 59–61 (AWE), and 83–85 (AVI) contribute to the 5-amino-6-(D-ribitylamino)uracil site. Residue 88–89 (ST) participates in (2S)-2-hydroxy-3-oxobutyl phosphate binding. His91 functions as the Proton donor in the catalytic mechanism. Asn116 provides a ligand contact to 5-amino-6-(D-ribitylamino)uracil. (2S)-2-hydroxy-3-oxobutyl phosphate is bound at residue Arg130.

The protein belongs to the DMRL synthase family. In terms of assembly, forms an icosahedral capsid composed of 60 subunits, arranged as a dodecamer of pentamers.

It carries out the reaction (2S)-2-hydroxy-3-oxobutyl phosphate + 5-amino-6-(D-ribitylamino)uracil = 6,7-dimethyl-8-(1-D-ribityl)lumazine + phosphate + 2 H2O + H(+). It participates in cofactor biosynthesis; riboflavin biosynthesis; riboflavin from 2-hydroxy-3-oxobutyl phosphate and 5-amino-6-(D-ribitylamino)uracil: step 1/2. Functionally, catalyzes the formation of 6,7-dimethyl-8-ribityllumazine by condensation of 5-amino-6-(D-ribitylamino)uracil with 3,4-dihydroxy-2-butanone 4-phosphate. This is the penultimate step in the biosynthesis of riboflavin. The polypeptide is 6,7-dimethyl-8-ribityllumazine synthase (Acinetobacter baumannii (strain AB0057)).